A 502-amino-acid polypeptide reads, in one-letter code: 2,3-bisphosphoglycerate-independent phosphoglycerate mutase (502 aa).

2 residues coordinate Mn(2+): Asp13 and Ser63. Ser63 (phosphoserine intermediate) is an active-site residue. Substrate contacts are provided by residues His117, 146-147 (RD), Arg177, Arg183, 251-254 (RSDR), and Lys324. 5 residues coordinate Mn(2+): Asp389, His393, Asp430, His431, and His448.

It belongs to the BPG-independent phosphoglycerate mutase family. As to quaternary structure, monomer. The cofactor is Mn(2+).

It carries out the reaction (2R)-2-phosphoglycerate = (2R)-3-phosphoglycerate. Its pathway is carbohydrate degradation; glycolysis; pyruvate from D-glyceraldehyde 3-phosphate: step 3/5. Its function is as follows. Catalyzes the interconversion of 2-phosphoglycerate and 3-phosphoglycerate. In Ureaplasma urealyticum serovar 10 (strain ATCC 33699 / Western), this protein is 2,3-bisphosphoglycerate-independent phosphoglycerate mutase.